The following is a 267-amino-acid chain: Non-homologous end joining protein Ku (267 aa).

One can recognise a Ku domain in the interval 11–195 (AVGQVSCAVA…KVKGEMLELA (185 aa)). The disordered stretch occupies residues 229–267 (GRKPKRKAAPKKAREPSDLMAALRESVAATERPRRRKAG).

Belongs to the prokaryotic Ku family. As to quaternary structure, homodimer. Interacts with LigD.

Its function is as follows. With LigD forms a non-homologous end joining (NHEJ) DNA repair enzyme, which repairs dsDNA breaks with reduced fidelity. Binds linear dsDNA with 5'- and 3'- overhangs but not closed circular dsDNA nor ssDNA. Recruits and stimulates the ligase activity of LigD. The chain is Non-homologous end joining protein Ku from Cereibacter sphaeroides (strain KD131 / KCTC 12085) (Rhodobacter sphaeroides).